The following is a 364-amino-acid chain: Aminomethyltransferase (364 aa).

This sequence belongs to the GcvT family. As to quaternary structure, the glycine cleavage system is composed of four proteins: P, T, L and H.

The enzyme catalyses N(6)-[(R)-S(8)-aminomethyldihydrolipoyl]-L-lysyl-[protein] + (6S)-5,6,7,8-tetrahydrofolate = N(6)-[(R)-dihydrolipoyl]-L-lysyl-[protein] + (6R)-5,10-methylene-5,6,7,8-tetrahydrofolate + NH4(+). Functionally, the glycine cleavage system catalyzes the degradation of glycine. This Salmonella enteritidis PT4 (strain P125109) protein is Aminomethyltransferase.